The primary structure comprises 162 residues: UPF0303 protein Arad_3071 (162 aa).

It belongs to the UPF0303 family.

This chain is UPF0303 protein Arad_3071, found in Rhizobium rhizogenes (strain K84 / ATCC BAA-868) (Agrobacterium radiobacter).